We begin with the raw amino-acid sequence, 179 residues long: Apoptosis regulator Bcl-2 homolog (179 aa).

The BH1 signature appears at 76–95 (ELFKDLINWGRICGFIVFSA). The short motif at 126–141 (PWMISHGGQEEFLAFS) is the BH2 element.

This sequence belongs to the Bcl-2 family. As to quaternary structure, interacts with host BECN1 (via BH3 homology domain); this interaction allows the virus to inhibit BECN1, and thus autophagy. Interacts with host BID. Interacts with host BAX.

Its subcellular location is the host mitochondrion. The protein resides in the host endoplasmic reticulum. Its function is as follows. Suppresses apoptosis in host cell to promote the viral replication. Has the ability to potentially bind to all the members of the proapoptotic Bcl-2 family. Inhibits autophagy by interacting with host Beclin 1 (BECN1). In African swine fever virus (isolate Tick/South Africa/Pretoriuskop Pr4/1996) (ASFV), this protein is Apoptosis regulator Bcl-2 homolog.